A 154-amino-acid polypeptide reads, in one-letter code: Myoglobin (154 aa).

The Globin domain maps to G2–K148. S4 is subject to Phosphoserine. H65 is a binding site for nitrite. O2 is bound at residue H65. Heme b is bound at residue H94.

The protein belongs to the globin family. As to quaternary structure, monomeric.

It localises to the cytoplasm. The protein resides in the sarcoplasm. It carries out the reaction Fe(III)-heme b-[protein] + nitric oxide + H2O = Fe(II)-heme b-[protein] + nitrite + 2 H(+). The enzyme catalyses H2O2 + AH2 = A + 2 H2O. Functionally, monomeric heme protein which primary function is to store oxygen and facilitate its diffusion within muscle tissues. Reversibly binds oxygen through a pentacoordinated heme iron and enables its timely and efficient release as needed during periods of heightened demand. Depending on the oxidative conditions of tissues and cells, and in addition to its ability to bind oxygen, it also has a nitrite reductase activity whereby it regulates the production of bioactive nitric oxide. Under stress conditions, like hypoxia and anoxia, it also protects cells against reactive oxygen species thanks to its pseudoperoxidase activity. The protein is Myoglobin (MB) of Tachyglossus aculeatus aculeatus (Southeast Australian short-beaked echidna).